The chain runs to 498 residues: Glycerol kinase (498 aa).

Thr-12 contacts ADP. Residues Thr-12, Thr-13, and Ser-14 each contribute to the ATP site. A sn-glycerol 3-phosphate-binding site is contributed by Thr-12. Arg-16 is an ADP binding site. Arg-82, Glu-83, Tyr-134, and Asp-244 together coordinate sn-glycerol 3-phosphate. Glycerol contacts are provided by Arg-82, Glu-83, Tyr-134, Asp-244, and Gln-245. Residues Thr-266 and Gly-310 each coordinate ADP. Residues Thr-266, Gly-310, Gln-314, and Gly-411 each contribute to the ATP site. The ADP site is built by Gly-411 and Asn-415.

It belongs to the FGGY kinase family.

It carries out the reaction glycerol + ATP = sn-glycerol 3-phosphate + ADP + H(+). Its pathway is polyol metabolism; glycerol degradation via glycerol kinase pathway; sn-glycerol 3-phosphate from glycerol: step 1/1. With respect to regulation, inhibited by fructose 1,6-bisphosphate (FBP). In terms of biological role, key enzyme in the regulation of glycerol uptake and metabolism. Catalyzes the phosphorylation of glycerol to yield sn-glycerol 3-phosphate. The protein is Glycerol kinase of Chloroflexus aurantiacus (strain ATCC 29364 / DSM 637 / Y-400-fl).